Reading from the N-terminus, the 468-residue chain is H(+)/Cl(-) exchange transporter ClcA (468 aa).

At 1–32 the chain is on the cytoplasmic side; sequence MIKRERIVKSVLAHVPKDAINQFVSRGSTPTS. The chain crosses the membrane as a helical span at residues 33 to 69; the sequence is FSVLFMAAIVGTLAGLVGTYFEIAVHFVSETRTEWLK. Over 70-76 the chain is Periplasmic; it reads SEIGSVL. The chain crosses the membrane as a helical span at residues 77 to 100; the sequence is PLWLAAILISGALAFIGYYLVNRF. The short motif at 106-110 is the Selectivity filter part_1 element; it reads GSGIP. Position 107 (serine 107) interacts with chloride. Residues 109 to 116 constitute an intramembrane region (helical); the sequence is IPEIEGAM. At 117 to 123 the chain is on the cytoplasmic side; that stretch reads DNIRSVR. 2 helical membrane-spanning segments follow: residues 124 to 141 and 148 to 166; these read WWRV…ALGS and EGPT…TDIF. Residues 146–150 carry the Selectivity filter part_2 motif; the sequence is GREGP. At 167–176 the chain is on the cytoplasmic side; it reads RVKDDDTRHS. 2 consecutive intramembrane regions (helical) follow at residues 177–189 and 193–201; these read LLAS…LAAA and PLAAIMFVV. The Cytoplasmic portion of the chain corresponds to 202–214; it reads EEMRPQFRYSLIS. A helical membrane pass occupies residues 215-232; sequence IRAVIISAIMANIVFRAI. Topologically, residues 233 to 252 are periplasmic; the sequence is NGQEAVITMPQYQSPELQSL. The chain crosses the membrane as a helical span at residues 253-281; sequence WLFLLLGSLFGVFGVVFNKLITIAQDSFV. Over 282-287 the chain is Cytoplasmic; it reads ALHKND. A helical membrane pass occupies residues 288 to 309; that stretch reads RKRYLITGTILGGVFGLLLLYV. The Periplasmic portion of the chain corresponds to 310–329; it reads PQLTGGGIGLIPDITNGNYS. Transmembrane regions (helical) follow at residues 330 to 349 and 355 to 376; these read ISIL…LCFG and GIFA…ASAD. A Selectivity filter part_3 motif is present at residues 355–359; that stretch reads GIFAP. Isoleucine 356 and phenylalanine 357 together coordinate chloride. The Periplasmic portion of the chain corresponds to 377 to 386; the sequence is MLLPSLTIEP. The helical intramembrane region spans 387–401; sequence GVFAIAGMGALFAAT. The segment at residues 402–404 is an intramembrane region (note=Loop between two helices); the sequence is VRA. The helical intramembrane region spans 405–416; sequence PITGILLVIEMT. The note=Loop between two helices intramembrane region spans 417-421; the sequence is NNYYL. The chain crosses the membrane as a helical span at residues 422 to 438; sequence ILPLIITSLGAVIVAQL. Residues 439 to 468 are Cytoplasmic-facing; that stretch reads LGGQPIYSQLLHRTLKNDKLRQQDLPENQA. Tyrosine 445 contacts chloride.

Belongs to the chloride channel (TC 2.A.49) family. ClcA subfamily. In terms of assembly, homodimer.

Its subcellular location is the cell inner membrane. It carries out the reaction 2 chloride(in) + H(+)(out) = 2 chloride(out) + H(+)(in). In terms of biological role, proton-coupled chloride transporter. Functions as antiport system and exchanges two chloride ions for 1 proton. Probably acts as an electrical shunt for an outwardly-directed proton pump that is linked to amino acid decarboxylation, as part of the extreme acid resistance (XAR) response. The chain is H(+)/Cl(-) exchange transporter ClcA from Vibrio campbellii (strain ATCC BAA-1116).